We begin with the raw amino-acid sequence, 430 residues long: Mannosylglucosylglycerate synthase (430 aa).

It belongs to the glycosyltransferase group 1 family. A divalent metal cation serves as cofactor.

It catalyses the reaction (2R)-2-O-(alpha-D-glucopyranosyl)-glycerate + GDP-alpha-D-mannose = (2R)-2-O-[alpha-D-mannopyranosyl-(1-&gt;2)-alpha-D-glucopyranosyl]-glycerate + GDP + H(+). Its function is as follows. Involved in the biosynthesis of the compatible solute mannosylglucosylglycerate through a nonphosphorylating pathway. Catalyzes the synthesis of mannosylglucosylglycerate (MGG) from glucosylglycerate (GG) and GDP-mannose. The chain is Mannosylglucosylglycerate synthase from Petrotoga mobilis (strain DSM 10674 / SJ95).